A 274-amino-acid chain; its full sequence is Putative pyruvate, phosphate dikinase regulatory protein 1 (274 aa).

G149 to T156 is an ADP binding site.

The protein belongs to the pyruvate, phosphate/water dikinase regulatory protein family. PDRP subfamily.

It carries out the reaction N(tele)-phospho-L-histidyl/L-threonyl-[pyruvate, phosphate dikinase] + ADP = N(tele)-phospho-L-histidyl/O-phospho-L-threonyl-[pyruvate, phosphate dikinase] + AMP + H(+). It catalyses the reaction N(tele)-phospho-L-histidyl/O-phospho-L-threonyl-[pyruvate, phosphate dikinase] + phosphate + H(+) = N(tele)-phospho-L-histidyl/L-threonyl-[pyruvate, phosphate dikinase] + diphosphate. Functionally, bifunctional serine/threonine kinase and phosphorylase involved in the regulation of the pyruvate, phosphate dikinase (PPDK) by catalyzing its phosphorylation/dephosphorylation. The chain is Putative pyruvate, phosphate dikinase regulatory protein 1 from Listeria monocytogenes serotype 4b (strain F2365).